A 418-amino-acid polypeptide reads, in one-letter code: Coenzyme A biosynthesis bifunctional protein CoaBC (418 aa).

The phosphopantothenoylcysteine decarboxylase stretch occupies residues 1–195; the sequence is MVDHKRIPKQ…ALPYDLAGRK (195 aa). The tract at residues 196–418 is phosphopantothenate--cysteine ligase; sequence LLVTAGGTRE…IVTFLAGCSS (223 aa). Asp285, Lys295, Phe336, Lys354, and Lys358 together coordinate CTP.

In the N-terminal section; belongs to the HFCD (homo-oligomeric flavin containing Cys decarboxylase) superfamily. The protein in the C-terminal section; belongs to the PPC synthetase family. The cofactor is Mg(2+). Requires FMN as cofactor.

It carries out the reaction N-[(R)-4-phosphopantothenoyl]-L-cysteine + H(+) = (R)-4'-phosphopantetheine + CO2. The catalysed reaction is (R)-4'-phosphopantothenate + L-cysteine + CTP = N-[(R)-4-phosphopantothenoyl]-L-cysteine + CMP + diphosphate + H(+). The protein operates within cofactor biosynthesis; coenzyme A biosynthesis; CoA from (R)-pantothenate: step 2/5. Its pathway is cofactor biosynthesis; coenzyme A biosynthesis; CoA from (R)-pantothenate: step 3/5. Catalyzes two sequential steps in the biosynthesis of coenzyme A. In the first step cysteine is conjugated to 4'-phosphopantothenate to form 4-phosphopantothenoylcysteine. In the second step the latter compound is decarboxylated to form 4'-phosphopantotheine. The chain is Coenzyme A biosynthesis bifunctional protein CoaBC from Mycobacterium bovis (strain ATCC BAA-935 / AF2122/97).